Reading from the N-terminus, the 260-residue chain is Triosephosphate isomerase (260 aa).

Position 11–13 (11–13 (NWK)) interacts with substrate. Residue His-103 is the Electrophile of the active site. Glu-175 serves as the catalytic Proton acceptor. Residues Gly-181, Ser-220, and 241-242 (GG) each bind substrate.

This sequence belongs to the triosephosphate isomerase family. Homodimer.

The protein localises to the cytoplasm. It carries out the reaction D-glyceraldehyde 3-phosphate = dihydroxyacetone phosphate. Its pathway is carbohydrate biosynthesis; gluconeogenesis. The protein operates within carbohydrate degradation; glycolysis; D-glyceraldehyde 3-phosphate from glycerone phosphate: step 1/1. In terms of biological role, involved in the gluconeogenesis. Catalyzes stereospecifically the conversion of dihydroxyacetone phosphate (DHAP) to D-glyceraldehyde-3-phosphate (G3P). The polypeptide is Triosephosphate isomerase (Shewanella sp. (strain W3-18-1)).